The chain runs to 441 residues: Hexane cyclase gkaB (441 aa).

Positions 1-25 (MTKFLAGAAIVLAVAFGSFFSQSST) are cleaved as a signal peptide. Asn-77, Asn-153, Asn-184, and Asn-308 each carry an N-linked (GlcNAc...) asparagine glycan.

It belongs to the Diels-Alderase family.

Its pathway is mycotoxin biosynthesis. Its function is as follows. Hexane cyclase; part of the gene cluster that mediates the biosynthesis of GKK1032, fungal natural products containing a macrocyclic para-cyclophane connected to a decahydrofluorene ring system that show potent antitumor activities. Within the pathway, gkaB functions synergistically with gkaX and gkaZ to form the cyclophane. The pathway begins with the PKS-NRPS gkaA which, with the help of the trans-enoyl reductase gkaC, synthesizes the polyketide-tyrosyl acyl thioester product which can be reductively off-loaded by the terminal reductase (R) domain in gkaA. The alpha/beta hydrolase gkaG is then required to catalyze the subsequent Knoevenagel condensation that affords the 3-pyrrolin-2-one ring, whereas the three proteins gkaB, gkaX and gkaZ then function synergistically to form the cyclophane. This Penicillium citrinum protein is Hexane cyclase gkaB.